The primary structure comprises 118 residues: Light-harvesting protein B-800/850 gamma chain (118 aa).

Its function is as follows. Seems to be required for the LH-II stabilization. The protein is Light-harvesting protein B-800/850 gamma chain (pucE) of Rhodobacter capsulatus (Rhodopseudomonas capsulata).